The primary structure comprises 404 residues: Diaminopropionate ammonia-lyase (404 aa).

Lysine 78 carries the N6-(pyridoxal phosphate)lysine modification.

Belongs to the diaminopropionate ammonia-lyase family. Homodimer. Pyridoxal 5'-phosphate is required as a cofactor.

It carries out the reaction (S)-2,3-diaminopropanoate + H2O + H(+) = pyruvate + 2 NH4(+). It catalyses the reaction (R)-2,3-diaminopropanoate + H2O + H(+) = pyruvate + 2 NH4(+). With respect to regulation, competitively inhibited by L- and D-alanine. Its function is as follows. Catalyzes the alpha,beta-elimination reaction of both L- and D-alpha,beta-diaminopropionate (DAP) to form pyruvate and ammonia. In vitro L- and D-isomers of serine are also degraded, though slowly; it is the only serine dehydratase which can eliminate an amino group at the beta-carbon position. In vivo L-, D- and a mixure of DL-DAP allow growth. DL-DAP is toxic in the absence of this enzyme, it may inhibit enzymes involved in the synthesis of pyruvate and aspartate, as well as amino acids derived from them. This is Diaminopropionate ammonia-lyase (dpaL) from Salmonella typhimurium (strain LT2 / SGSC1412 / ATCC 700720).